The chain runs to 153 residues: Small ribosomal subunit protein uS15 (153 aa).

The protein belongs to the universal ribosomal protein uS15 family. As to quaternary structure, part of the 30S ribosomal subunit.

This chain is Small ribosomal subunit protein uS15, found in Sulfolobus acidocaldarius (strain ATCC 33909 / DSM 639 / JCM 8929 / NBRC 15157 / NCIMB 11770).